Reading from the N-terminus, the 221-residue chain is MQIYQFGKIVSKNKNYLILENHGSGYLIYVPRIDRFSRDENRKIYIYEHENDYTKITYGFASFRERILFEDLISIQGVGPKTAISALNSGMQNLINLIAANDWKTLAKIPYLSEKNAKQIVFEFQKKYERFNENHKNQTEETNQDSQEKELEKKDDLADITIQKSNLEDKTAANLEDTLKMLGFKPRQIDYALTKVEPNENFENLIENAIKIISNAREFRN.

The tract at residues 1-61 is domain I; that stretch reads MQIYQFGKIV…DYTKITYGFA (61 aa). The segment at 62–139 is domain II; sequence SFRERILFED…RFNENHKNQT (78 aa). Positions 133-155 are disordered; it reads ENHKNQTEETNQDSQEKELEKKD. A flexible linker region spans residues 140-166; the sequence is EETNQDSQEKELEKKDDLADITIQKSN. Basic and acidic residues predominate over residues 146-155; that stretch reads SQEKELEKKD. Positions 167–221 are domain III; the sequence is LEDKTAANLEDTLKMLGFKPRQIDYALTKVEPNENFENLIENAIKIISNAREFRN.

Belongs to the RuvA family. As to quaternary structure, homotetramer. Forms an RuvA(8)-RuvB(12)-Holliday junction (HJ) complex. HJ DNA is sandwiched between 2 RuvA tetramers; dsDNA enters through RuvA and exits via RuvB. An RuvB hexamer assembles on each DNA strand where it exits the tetramer. Each RuvB hexamer is contacted by two RuvA subunits (via domain III) on 2 adjacent RuvB subunits; this complex drives branch migration. In the full resolvosome a probable DNA-RuvA(4)-RuvB(12)-RuvC(2) complex forms which resolves the HJ.

The protein localises to the cytoplasm. In terms of biological role, the RuvA-RuvB-RuvC complex processes Holliday junction (HJ) DNA during genetic recombination and DNA repair, while the RuvA-RuvB complex plays an important role in the rescue of blocked DNA replication forks via replication fork reversal (RFR). RuvA specifically binds to HJ cruciform DNA, conferring on it an open structure. The RuvB hexamer acts as an ATP-dependent pump, pulling dsDNA into and through the RuvAB complex. HJ branch migration allows RuvC to scan DNA until it finds its consensus sequence, where it cleaves and resolves the cruciform DNA. The chain is Holliday junction branch migration complex subunit RuvA from Mesomycoplasma hyopneumoniae (strain J / ATCC 25934 / NCTC 10110) (Mycoplasma hyopneumoniae).